An 869-amino-acid chain; its full sequence is TATA box-binding protein-associated factor RNA polymerase I subunit C (869 aa).

Disordered stretches follow at residues Ser605–Thr629 and Gly729–Phe869. A Phosphothreonine modification is found at Thr834. The span at Pro835 to Pro860 shows a compositional bias: polar residues. A Phosphoserine modification is found at Ser848.

In terms of assembly, component of the transcription factor SL1/TIF-IB complex, composed of TBP and at least TAF1A, TAF1B, TAF1C and TAF1D. In the complex interacts directly with TBP, TAF1A and TAF1B. Interaction of the SL1/TIF-IB subunits with TBP excludes interaction of TBP with the transcription factor IID (TFIID) subunits. Interacts with MYC and RRN3. Interacts with p53/TP53; the interaction prevents the association of SL1/TIF-IB with UBTF and represses RNA polymerase I transcription. Part of Pol I pre-initiation complex (PIC), in which Pol I core assembles with RRN3 and promoter-bound UTBF and SL1/TIF-IB complex.

It is found in the nucleus. The protein resides in the nucleolus. Its function is as follows. Component of the transcription factor SL1/TIF-IB complex, which is involved in the assembly of the PIC (pre-initiation complex) during RNA polymerase I-dependent transcription. The rate of PIC formation probably is primarily dependent on the rate of association of SL1/TIF-IB with the rDNA promoter. SL1/TIF-IB is involved in stabilization of nucleolar transcription factor 1/UBTF on rDNA. Formation of SL1/TIF-IB excludes the association of TBP with TFIID subunits. Recruits RNA polymerase I to the rRNA gene promoter via interaction with RRN3. The polypeptide is TATA box-binding protein-associated factor RNA polymerase I subunit C (TAF1C) (Homo sapiens (Human)).